The chain runs to 257 residues: MALAKRIIPCLDVTAGRVVKGVNFVELRDAGDPVEIARRYDDQGADELTFLDITATSDQRDLILPIIEAVASQVFIPLTVGGGVRAVEDVRRLLNAGADKISMNSSAVANPQLVKDATDKYGSQCIVVAIDAKRVSADGEPPRWEVFTHGGRKATGLEAVEWARKMAELGAGEILLTSMDRDGTKSGFDLALTRAVSDAVPIPVIASGGVGNLQHLADGIKNGHADAVLAASIFHYGEHTVGEAKRFMADQGISVRL.

Residues Asp12 and Asp131 contribute to the active site.

The protein belongs to the HisA/HisF family. Heterodimer of HisH and HisF.

The protein localises to the cytoplasm. It carries out the reaction 5-[(5-phospho-1-deoxy-D-ribulos-1-ylimino)methylamino]-1-(5-phospho-beta-D-ribosyl)imidazole-4-carboxamide + L-glutamine = D-erythro-1-(imidazol-4-yl)glycerol 3-phosphate + 5-amino-1-(5-phospho-beta-D-ribosyl)imidazole-4-carboxamide + L-glutamate + H(+). The protein operates within amino-acid biosynthesis; L-histidine biosynthesis; L-histidine from 5-phospho-alpha-D-ribose 1-diphosphate: step 5/9. IGPS catalyzes the conversion of PRFAR and glutamine to IGP, AICAR and glutamate. The HisF subunit catalyzes the cyclization activity that produces IGP and AICAR from PRFAR using the ammonia provided by the HisH subunit. The chain is Imidazole glycerol phosphate synthase subunit HisF from Paraburkholderia phytofirmans (strain DSM 17436 / LMG 22146 / PsJN) (Burkholderia phytofirmans).